Consider the following 399-residue polypeptide: Multi-drug resistance efflux pump PmrA (399 aa).

Transmembrane regions (helical) follow at residues 12 to 34 (IAWF…MPIF), 49 to 71 (AGLA…GILA), 84 to 106 (GLAM…LIFL), 140 to 162 (LSTG…AELF), 167 to 186 (VFLL…ICFI), 217 to 239 (LFLT…ALYV), 248 to 270 (LLFV…AGVM), 306 to 328 (LGLY…NALL), 340 to 362 (VFAF…GSAV), and 366 to 388 (FGYH…FNLI).

Belongs to the major facilitator superfamily. TCR/Tet family.

Its subcellular location is the cell membrane. Functionally, efflux pump for various substrates. In Streptococcus pneumoniae serotype 4 (strain ATCC BAA-334 / TIGR4), this protein is Multi-drug resistance efflux pump PmrA (pmrA).